Here is a 289-residue protein sequence, read N- to C-terminus: 4-hydroxy-tetrahydrodipicolinate synthase (289 aa).

Threonine 44 contacts pyruvate. Tyrosine 130 functions as the Proton donor/acceptor in the catalytic mechanism. Lysine 158 (schiff-base intermediate with substrate) is an active-site residue. Isoleucine 200 provides a ligand contact to pyruvate.

Belongs to the DapA family. In terms of assembly, homotetramer; dimer of dimers.

The protein localises to the cytoplasm. It catalyses the reaction L-aspartate 4-semialdehyde + pyruvate = (2S,4S)-4-hydroxy-2,3,4,5-tetrahydrodipicolinate + H2O + H(+). Its pathway is amino-acid biosynthesis; L-lysine biosynthesis via DAP pathway; (S)-tetrahydrodipicolinate from L-aspartate: step 3/4. In terms of biological role, catalyzes the condensation of (S)-aspartate-beta-semialdehyde [(S)-ASA] and pyruvate to 4-hydroxy-tetrahydrodipicolinate (HTPA). This Archaeoglobus fulgidus (strain ATCC 49558 / DSM 4304 / JCM 9628 / NBRC 100126 / VC-16) protein is 4-hydroxy-tetrahydrodipicolinate synthase.